We begin with the raw amino-acid sequence, 132 residues long: Small ribosomal subunit protein uS8 (132 aa).

It belongs to the universal ribosomal protein uS8 family. Part of the 30S ribosomal subunit. Contacts proteins S5 and S12.

Functionally, one of the primary rRNA binding proteins, it binds directly to 16S rRNA central domain where it helps coordinate assembly of the platform of the 30S subunit. The sequence is that of Small ribosomal subunit protein uS8 from Limosilactobacillus fermentum (strain NBRC 3956 / LMG 18251) (Lactobacillus fermentum).